Reading from the N-terminus, the 468-residue chain is Glutamate--tRNA ligase (468 aa).

Residues 8–18 carry the 'HIGH' region motif; that stretch reads PSPTGDPHVGT. Positions 243–247 match the 'KMSKS' region motif; it reads KISKR. Residue Lys246 coordinates ATP.

Belongs to the class-I aminoacyl-tRNA synthetase family. Glutamate--tRNA ligase type 1 subfamily. Monomer.

It localises to the cytoplasm. It carries out the reaction tRNA(Glu) + L-glutamate + ATP = L-glutamyl-tRNA(Glu) + AMP + diphosphate. Catalyzes the attachment of glutamate to tRNA(Glu) in a two-step reaction: glutamate is first activated by ATP to form Glu-AMP and then transferred to the acceptor end of tRNA(Glu). The protein is Glutamate--tRNA ligase of Thermus thermophilus (strain ATCC BAA-163 / DSM 7039 / HB27).